Consider the following 1018-residue polypeptide: Collagen, type I, alpha 1a (1018 aa).

Residues 1-10 are compositionally biased toward basic and acidic residues; sequence QMSAGYDDKS. The segment at 1–991 is disordered; it reads QMSAGYDDKS…SGEYWLDPDQ (991 aa). Over residues 13 to 30 the composition is skewed to pro residues; that stretch reads MPVPGPMGPMGPRGPPGS. The segment covering 31 to 58 has biased composition (low complexity); that stretch reads PGASGPQGFTGPPGEPGEAGPSGAMGPR. Residues 67–81 show a composition bias toward basic and acidic residues; the sequence is NGEDGESGKPGRGGE. Residues 126–136 are compositionally biased toward low complexity; that stretch reads PRGNDGAAGAA. The segment covering 138–151 has biased composition (pro residues); it reads PPGPTGPAGPPGFP. Over residues 152–170 the composition is skewed to gly residues; it reads GGPGAKGDAGAQGGRGPEG. Composition is skewed to low complexity over residues 171-214 and 223-261; these read PAGA…AGAP and SGPQ…APGV. Positions 284–296 are enriched in gly residues; it reads GARGGPGGRGFPG. 4 stretches are compositionally biased toward low complexity: residues 370 to 385, 424 to 442, 452 to 510, and 543 to 558; these read VGAR…PGPK, AGPA…PGFQ, LPGE…QGMP, and RGLT…AGAT. Over residues 568–577 the composition is skewed to gly residues; that stretch reads GPVGPGGARG. 2 stretches are compositionally biased toward low complexity: residues 591–627 and 641–663; these read AGFA…AGPT and PKGA…AGRV. The span at 665–677 shows a compositional bias: pro residues; it reads PPGPSGNPGPPGP. Low complexity-rich tracts occupy residues 701–746 and 775–795; these read EVGA…XXPG and PGLA…NEGS. Positions 819 to 829 are enriched in pro residues; sequence APGPPGAPGPV. Positions 843-862 are enriched in low complexity; it reads PAGPAGSAGPAGPRGPAGAP. Positions 865 to 876 are enriched in basic and acidic residues; sequence RGDKGESGEAGE. Over residues 889–925 the composition is skewed to low complexity; it reads SGSSGEQGPAGAAGPAGPRGPAGSAGSPGKDGMSGLP. In terms of domain architecture, Fibrillar collagen NC1 spans 932-1018; the sequence is GPRGGFDLGF…CTSHTGTWGK (87 aa). Over residues 948 to 959 the composition is skewed to basic and acidic residues; sequence KAPDPFRDRDLE. The segment covering 963-973 has biased composition (polar residues); the sequence is TLKSLSQQLEQ.

It belongs to the fibrillar collagen family.

The protein localises to the secreted. It localises to the extracellular space. Its subcellular location is the extracellular matrix. In Epinephelus costae (Goldblotch grouper), this protein is Collagen, type I, alpha 1a.